Here is a 262-residue protein sequence, read N- to C-terminus: Type III pantothenate kinase (262 aa).

Residue 6–13 (DVGNTNAV) participates in ATP binding. Substrate is bound by residues Tyr100 and 107–110 (GADR). Asp109 functions as the Proton acceptor in the catalytic mechanism. Position 129 (Asp129) interacts with K(+). Thr132 serves as a coordination point for ATP. Thr184 is a binding site for substrate.

It belongs to the type III pantothenate kinase family. As to quaternary structure, homodimer. NH4(+) serves as cofactor. The cofactor is K(+).

The protein resides in the cytoplasm. The catalysed reaction is (R)-pantothenate + ATP = (R)-4'-phosphopantothenate + ADP + H(+). It functions in the pathway cofactor biosynthesis; coenzyme A biosynthesis; CoA from (R)-pantothenate: step 1/5. Catalyzes the phosphorylation of pantothenate (Pan), the first step in CoA biosynthesis. The sequence is that of Type III pantothenate kinase from Bacillus cytotoxicus (strain DSM 22905 / CIP 110041 / 391-98 / NVH 391-98).